The sequence spans 278 residues: Octanoyl-[GcvH]:protein N-octanoyltransferase (278 aa).

One can recognise a BPL/LPL catalytic domain in the interval L41–H247. C146 functions as the Acyl-thioester intermediate in the catalytic mechanism.

Belongs to the octanoyltransferase LipL family.

The enzyme catalyses N(6)-octanoyl-L-lysyl-[glycine-cleavage complex H protein] + L-lysyl-[lipoyl-carrier protein] = N(6)-octanoyl-L-lysyl-[lipoyl-carrier protein] + L-lysyl-[glycine-cleavage complex H protein]. It participates in protein modification; protein lipoylation via endogenous pathway; protein N(6)-(lipoyl)lysine from octanoyl-[acyl-carrier-protein]. Functionally, catalyzes the amidotransfer (transamidation) of the octanoyl moiety from octanoyl-GcvH to the lipoyl domain of the E2 subunit of lipoate-dependent enzymes. In Lysinibacillus sphaericus (strain C3-41), this protein is Octanoyl-[GcvH]:protein N-octanoyltransferase.